The following is a 216-amino-acid chain: Uracil phosphoribosyltransferase (216 aa).

5-phospho-alpha-D-ribose 1-diphosphate is bound by residues Arg84, Arg109, and 137-145; that span reads DPMLATGNT. Residues Ile202 and 207–209 each bind uracil; that span reads GDA. A 5-phospho-alpha-D-ribose 1-diphosphate-binding site is contributed by Asp208.

This sequence belongs to the UPRTase family. Mg(2+) serves as cofactor.

It catalyses the reaction UMP + diphosphate = 5-phospho-alpha-D-ribose 1-diphosphate + uracil. The protein operates within pyrimidine metabolism; UMP biosynthesis via salvage pathway; UMP from uracil: step 1/1. With respect to regulation, allosterically activated by GTP. In terms of biological role, catalyzes the conversion of uracil and 5-phospho-alpha-D-ribose 1-diphosphate (PRPP) to UMP and diphosphate. The protein is Uracil phosphoribosyltransferase of Synechocystis sp. (strain ATCC 27184 / PCC 6803 / Kazusa).